A 368-amino-acid polypeptide reads, in one-letter code: Spermidine/putrescine import ATP-binding protein PotA (368 aa).

Residues 6-236 (VSIKNVSKFF…PVNVFAATFI (231 aa)) enclose the ABC transporter domain. 38–45 (GPSGCGKT) is a binding site for ATP.

It belongs to the ABC transporter superfamily. Spermidine/putrescine importer (TC 3.A.1.11.1) family. The complex is composed of two ATP-binding proteins (PotA), two transmembrane proteins (PotB and PotC) and a solute-binding protein (PotD).

It localises to the cell inner membrane. It catalyses the reaction ATP + H2O + polyamine-[polyamine-binding protein]Side 1 = ADP + phosphate + polyamineSide 2 + [polyamine-binding protein]Side 1.. In terms of biological role, part of the ABC transporter complex PotABCD involved in spermidine/putrescine import. Responsible for energy coupling to the transport system. The polypeptide is Spermidine/putrescine import ATP-binding protein PotA (Thermotoga maritima (strain ATCC 43589 / DSM 3109 / JCM 10099 / NBRC 100826 / MSB8)).